A 141-amino-acid polypeptide reads, in one-letter code: HTH-type transcriptional repressor NsrR (141 aa).

Residues 2–129 (QLTSFTDYGL…DNYTLADLVE (128 aa)) form the HTH rrf2-type domain. Positions 28 to 51 (ISEVTDVYGVSRNHMVKIINQLSR) form a DNA-binding region, H-T-H motif. The [2Fe-2S] cluster site is built by C91, C96, and C102.

It depends on [2Fe-2S] cluster as a cofactor.

Functionally, nitric oxide-sensitive repressor of genes involved in protecting the cell against nitrosative stress. May require iron for activity. In Escherichia coli O139:H28 (strain E24377A / ETEC), this protein is HTH-type transcriptional repressor NsrR.